The sequence spans 380 residues: 1-deoxy-D-xylulose 5-phosphate reductoisomerase (380 aa).

NADPH is bound by residues T10, G11, S12, I13, G36, R37, N38, and N120. K121 contributes to the 1-deoxy-D-xylulose 5-phosphate binding site. E122 lines the NADPH pocket. D146 contributes to the Mn(2+) binding site. The 1-deoxy-D-xylulose 5-phosphate site is built by S147, E148, S172, and H195. E148 is a binding site for Mn(2+). G201 contacts NADPH. Positions 208, 213, 214, and 217 each coordinate 1-deoxy-D-xylulose 5-phosphate. E217 serves as a coordination point for Mn(2+).

The protein belongs to the DXR family. Mg(2+) is required as a cofactor. Mn(2+) serves as cofactor.

It carries out the reaction 2-C-methyl-D-erythritol 4-phosphate + NADP(+) = 1-deoxy-D-xylulose 5-phosphate + NADPH + H(+). Its pathway is isoprenoid biosynthesis; isopentenyl diphosphate biosynthesis via DXP pathway; isopentenyl diphosphate from 1-deoxy-D-xylulose 5-phosphate: step 1/6. Functionally, catalyzes the NADPH-dependent rearrangement and reduction of 1-deoxy-D-xylulose-5-phosphate (DXP) to 2-C-methyl-D-erythritol 4-phosphate (MEP). The protein is 1-deoxy-D-xylulose 5-phosphate reductoisomerase of Listeria monocytogenes serovar 1/2a (strain ATCC BAA-679 / EGD-e).